Reading from the N-terminus, the 93-residue chain is MQADQVLKLVRLSEKSNKLSSELGQYTFEVFKGTNKHQIAEAVEQTFKVTVKRVNVQNYRGKNKKSRTGRPSVGSDYKKAIVTLKAGDKIELV.

This sequence belongs to the universal ribosomal protein uL23 family. As to quaternary structure, part of the 50S ribosomal subunit. Contacts protein L29, and trigger factor when it is bound to the ribosome.

In terms of biological role, one of the early assembly proteins it binds 23S rRNA. One of the proteins that surrounds the polypeptide exit tunnel on the outside of the ribosome. Forms the main docking site for trigger factor binding to the ribosome. The polypeptide is Large ribosomal subunit protein uL23 (Opitutus terrae (strain DSM 11246 / JCM 15787 / PB90-1)).